Reading from the N-terminus, the 674-residue chain is Probable copper-transporting P-type ATPase B (674 aa).

Residues 1–22 are disordered; the sequence is MNHSNQMHHDNHESHNHHSGHA. Residues 7–16 are compositionally biased toward basic and acidic residues; sequence MHHDNHESHN. Transmembrane regions (helical) follow at residues 32–52, 57–77, 95–115, 127–147, 284–304, and 315–335; these read FFVS…MGIN, FTFP…FFYG, GMMT…LYAF, TMDF…GHWI, GYLF…WMLI, and LVTV…PLVT. D367 serves as the catalytic 4-aspartylphosphate intermediate. Mg(2+) contacts are provided by D565 and D569. A run of 2 helical transmembrane segments spans residues 623-645 and 649-671; these read LWWG…AFVG and SPAV…AFTL.

Belongs to the cation transport ATPase (P-type) (TC 3.A.3) family. Type IB subfamily.

It localises to the cell membrane. The catalysed reaction is Cu(+)(in) + ATP + H2O = Cu(+)(out) + ADP + phosphate + H(+). In terms of biological role, involved in copper transport. The sequence is that of Probable copper-transporting P-type ATPase B (copB) from Staphylococcus epidermidis (strain ATCC 12228 / FDA PCI 1200).